The primary structure comprises 490 residues: Cytochrome P450 monooxygenase anuE (490 aa).

C405 contributes to the heme binding site.

The protein belongs to the cytochrome P450 family. Heme is required as a cofactor.

It carries out the reaction 2-hydroxymethyl-3-pentylphenol + reduced [NADPH--hemoprotein reductase] + O2 = (8S)-annullatin E + oxidized [NADPH--hemoprotein reductase] + H2O + H(+). It participates in secondary metabolite biosynthesis. Its function is as follows. Cytochrome P450 monooxygenase; part of the gene cluster that mediates the biosynthesis of annullatin D, an alkylated aromatic polyketide with a fused dihydrobenzofuran lactone ring system that exhibits potent agonistic activities toward the cannabinoid receptors. Within the pathway, anuE catalyzes the hydroxylation of 2-hydroxymethyl-3-pentylphenol at the side chain to produce (8S)-annullatin E. The annullatin backbone 2-hydroxymethyl-3-pentylphenol is assembled from one acetyl-CoA starter unit and 5 malonyl-CoA elongation units by cooperation of the highly reducing polyketide synthase anuA, the short-chain dehydrogenase anuB and the oxidoreductase anuC, before being hydroxylated at the C-5 alkyl chain by the cytochrome P450 monooxygenase anuE to form (8S)-annullatin E. The prenyltransferase anuH subsequently installs one isoprenyl group at the benzene ring to form (8S)-annullatin J. Enzymatic or nonenzymatic dihydro-benzofuran ring formation between the prenyl and the phenolic hydroxyl groups in (8S)-annullatin J results in two diastereomers (2S,9S)-annullatin H and compound 12. The intermediate (2S,9S)-annullatin H is then converted to (2S,9S)-annullatin D by the FAD-linked oxidoreductase anuG-catalyzed five-member lactone ring formation. The isomer 12 acts as a substrate for the short-chain dehydrogenase anuF and is oxidized to (2R)-annullatin F, which is subsequently acetylated by an acetyltransferase leading to (2R)-annullatin G formation. The remaining enzymes identified within the cluster, anuD, anuI and anuJ, seem not to be involved in annullatin biosynthesis. The protein is Cytochrome P450 monooxygenase anuE of Penicillium roqueforti (strain FM164).